The primary structure comprises 439 residues: Tol-Pal system protein TolB (439 aa).

A signal peptide spans 1–22 (MKKPLRWLAALTALLLPLSAFA).

The protein belongs to the TolB family. As to quaternary structure, the Tol-Pal system is composed of five core proteins: the inner membrane proteins TolA, TolQ and TolR, the periplasmic protein TolB and the outer membrane protein Pal. They form a network linking the inner and outer membranes and the peptidoglycan layer.

The protein resides in the periplasm. Functionally, part of the Tol-Pal system, which plays a role in outer membrane invagination during cell division and is important for maintaining outer membrane integrity. This chain is Tol-Pal system protein TolB, found in Xanthomonas campestris pv. campestris (strain 8004).